We begin with the raw amino-acid sequence, 111 residues long: Class I hydrophobin SC4 (111 aa).

Positions 1–25 (MRFSLALLALPALAAAAPVPGGGKG) are cleaved as a signal peptide. Cystine bridges form between C30–C37, C38–C72, C86–C92, and C93–C106. The N-linked (GlcNAc...) asparagine glycan is linked to N39.

The protein belongs to the fungal hydrophobin family. In terms of assembly, self-assembles to form functional amyloid fibrils called rodlets. Self-assembly into fibrillar rodlets occurs spontaneously at hydrophobic:hydrophilic interfaces and the rodlets further associate laterally to form amphipathic monolayers.

The protein localises to the secreted. Its subcellular location is the cell wall. Functionally, aerial growth, conidiation, and dispersal of filamentous fungi in the environment rely upon a capability of their secreting small amphipathic proteins called hydrophobins (HPBs) with low sequence identity. Class I can self-assemble into an outermost layer of rodlet bundles on aerial cell surfaces, conferring cellular hydrophobicity that supports fungal growth, development and dispersal; whereas Class II form highly ordered films at water-air interfaces through intermolecular interactions but contribute nothing to the rodlet structure. SC4 is a dikaryon-specific class I hydrophobin that contributes to the formation of aerial hyphae and fruiting bodies. Plays a role within fruiting bodies by preventing gas channels filling with water under wet conditions, probably serving uninterrupted gas exchange. SC4 cannot fully substitute for SC3. Involved in the unusual characteristic of mounds to adhere to and completely envelop adjacent fruiting bodies on mosaic colonies. The sequence is that of Class I hydrophobin SC4 from Schizophyllum commune (Split gill fungus).